The chain runs to 565 residues: MMLVVSENYLLSPSLYLKALKLCSYQNVKKQLLLIHGNSITNGFCSNLQLKDMLIDLYLKQGDVKHARKLFDRISKRDVVSWTAMISRFSRCGYHPDALLLFKEMHREDVKANQFTYGSVLKSCKDLGCLKEGMQIHGSVEKGNCAGNLIVRSALLSLYARCGKMEEARLQFDSMKERDLVSWNAMIDGYTANACADTSFSLFQLMLTEGKKPDCFTFGSLLRASIVVKCLEIVSELHGLAIKLGFGRSSALIRSLVNAYVKCGSLANAWKLHEGTKKRDLLSCTALITGFSQQNNCTSDAFDIFKDMIRMKTKMDEVVVSSMLKICTTIASVTIGRQIHGFALKSSQIRFDVALGNSLIDMYAKSGEIEDAVLAFEEMKEKDVRSWTSLIAGYGRHGNFEKAIDLYNRMEHERIKPNDVTFLSLLSACSHTGQTELGWKIYDTMINKHGIEAREEHLSCIIDMLARSGYLEEAYALIRSKEGIVSLSSSTWGAFLDACRRHGNVQLSKVAATQLLSMEPRKPVNYINLASVYAANGAWDNALNTRKLMKESGSCNKAPGYSLVY.

PPR repeat units follow at residues 12 to 46 (SPSL…GFCS), 47 to 77 (NLQL…ISKR), 78 to 112 (DVVS…DVKA), 113 to 147 (NQFT…NCAG), 148 to 178 (NLIV…MKER), 179 to 213 (DLVS…GKKP), 214 to 248 (DCFT…GFGR), 249 to 279 (SSAL…TKKR), 280 to 315 (DLLS…KTKM), 316 to 351 (DEVV…QIRF), 352 to 382 (DVAL…MKEK), 383 to 417 (DVRS…RIKP), 418 to 448 (NDVT…MINK), and 454 to 484 (REEH…KEGI). Residues 491-565 (TWGAFLDACR…NKAPGYSLVY (75 aa)) are type E motif; degenerate.

The protein belongs to the PPR family. PCMP-E subfamily.

This is Pentatricopeptide repeat-containing protein At3g20730 (PCMP-E94) from Arabidopsis thaliana (Mouse-ear cress).